The following is a 264-amino-acid chain: Thymidylate synthase (264 aa).

Arg-21 contacts dUMP. Position 51 (His-51) interacts with (6R)-5,10-methylene-5,6,7,8-tetrahydrofolate. Position 126 to 127 (126 to 127 (RR)) interacts with dUMP. The active-site Nucleophile is the Cys-146. Residues 166–169 (RSAD), Asn-177, and 207–209 (HLY) contribute to the dUMP site. Asp-169 provides a ligand contact to (6R)-5,10-methylene-5,6,7,8-tetrahydrofolate. Ala-263 provides a ligand contact to (6R)-5,10-methylene-5,6,7,8-tetrahydrofolate.

Belongs to the thymidylate synthase family. Bacterial-type ThyA subfamily. As to quaternary structure, homodimer.

Its subcellular location is the cytoplasm. The catalysed reaction is dUMP + (6R)-5,10-methylene-5,6,7,8-tetrahydrofolate = 7,8-dihydrofolate + dTMP. It functions in the pathway pyrimidine metabolism; dTTP biosynthesis. Catalyzes the reductive methylation of 2'-deoxyuridine-5'-monophosphate (dUMP) to 2'-deoxythymidine-5'-monophosphate (dTMP) while utilizing 5,10-methylenetetrahydrofolate (mTHF) as the methyl donor and reductant in the reaction, yielding dihydrofolate (DHF) as a by-product. This enzymatic reaction provides an intracellular de novo source of dTMP, an essential precursor for DNA biosynthesis. This Legionella pneumophila (strain Paris) protein is Thymidylate synthase.